The chain runs to 390 residues: Elongation factor Ts, mitochondrial (390 aa).

The protein belongs to the EF-Ts family.

It localises to the mitochondrion. In terms of biological role, associates with the EF-Tu.GDP complex and induces the exchange of GDP to GTP. It remains bound to the aminoacyl-tRNA.EF-Tu.GTP complex up to the GTP hydrolysis stage on the ribosome. The chain is Elongation factor Ts, mitochondrial from Plasmodium vivax (strain Salvador I).